Here is a 528-residue protein sequence, read N- to C-terminus: CTD kinase subunit alpha (528 aa).

The segment covering 1–15 (MSYNNGNTYSKSYSR) has biased composition (polar residues). The segment at 1-148 (MSYNNGNTYS…NTSNDIKNGY (148 aa)) is disordered. Serine 14 carries the post-translational modification Phosphoserine; by autocatalysis. Positions 37–44 (PPKRIRTD) match the Nuclear localization signal motif. A compositionally biased stretch (polar residues) spans 45 to 103 (SGYQSNMDNISSHRVNSNDQPGHTKSRGNNNLSRYNDTSFQTSSRYQGSRYNNNNTSYE). Positions 104-118 (NRPKSIKRDETKAEF) are enriched in basic and acidic residues. Residues 134-144 (YNNSSNTSNDI) are compositionally biased toward polar residues. Residues 183-469 (YLRIMQVGEG…ATEALQSDYF (287 aa)) enclose the Protein kinase domain. Residues 189-197 (VGEGTYGKV) and lysine 212 contribute to the ATP site. Residue aspartate 306 is the Proton acceptor of the active site. Position 338 is a phosphothreonine (threonine 338). A disordered region spans residues 497–528 (QKRPNILSTNTNNKGNGNSNNNNNNNNDDDDK). Positions 504 to 522 (STNTNNKGNGNSNNNNNNN) are enriched in low complexity.

Belongs to the protein kinase superfamily. CMGC Ser/Thr protein kinase family. CDC2/CDKX subfamily. CTDK-I consists of three subunits, CTK1, CTK2 and CTK3 (also called alpha, beta and gamma). Interacts directly with the CTK2 and CTK3 subunits, this interaction is required for kinase activity. Interacts with RNA polymerase I. Interacts with SNF1, but only at low glucose concentrations. Interacts with translating ribosomes. Post-translationally, phosphorylated on Thr-338 by CAK1. Phosphorylation is essential for the elevated CTD Ser-2 phosphorylation and required to activate transcription of stationary-phase genes during the diauxic shift.

The protein localises to the nucleus. The protein resides in the nucleolus. Its subcellular location is the cytoplasm. The enzyme catalyses [DNA-directed RNA polymerase] + ATP = phospho-[DNA-directed RNA polymerase] + ADP + H(+). Functionally, catalytic subunit of the CTDK-I complex, which hyperphosphorylates the C-terminal heptapeptide repeat domain (CTD) of the largest RNA polymerase II subunit. CTDK-I phosphorylates 'Ser-5' if the CTD substrate is not phosphorylated at 'Ser-5', but will phosphorylate 'Ser-2' of a CTD substrate if 'Ser-5' is already phosphorylated. CTDK-I is also more reactive toward substrates that are prephosphorylated at 'Ser-2' or 'Ser-5' compared with an unphosphorylated CTD substrate, therefore efficiently creating doubly phosphorylated CTD repeats. Involved in RNA polymerase II transcriptional elongation, and through PTI1, pre-mRNA 3'-end processing. Participates in both positive and negative regulation of CTD phosphorylation. Required for DNA damage induced transcription, including the expression of the RNR genes, and reprogramming of gene expression upon amino acid starvation. Required for SET2 mediated H3K36 methylation. Also regulates H3K4 methylation. Controls the maintenance of suppressive chromatin in the coding regions of genes by both promoting H3K36 methylation, which leads to histone deacetylation, and catalyzing phosphorylation of the CTD required to localize H3K4 chromatin modification specifically to the 5' ends of genes, thereby creating a boundary for H3K4 methylation that prevents a mark associated with transcriptional initiation from spreading into the bodies of genes. Involved in RNA polymerase I transcription. Involved in telomere maintenance. Acts together with SNF1 to induce GSY2 transcription in response to glucose limitation. Involved in the adaptation to alternative carbon sources, including galactose, glycerol and ethanol, but not raffinose. Required for the integrity of the rDNA locus. Functions in translation elongation by enhancing decoding fidelity. Needed for translational accuracy by phosphorylating RPS2. The sequence is that of CTD kinase subunit alpha (CTK1) from Saccharomyces cerevisiae (strain ATCC 204508 / S288c) (Baker's yeast).